A 429-amino-acid chain; its full sequence is Adenylosuccinate synthetase (429 aa).

GTP-binding positions include G12–K18 and G40–T42. Catalysis depends on D13, which acts as the Proton acceptor. The Mg(2+) site is built by D13 and G40. IMP-binding positions include D13–K16, N38–H41, T127, R141, Q222, T237, and R301. The Proton donor role is filled by H41. A297–R303 is a binding site for substrate. Residues R303, K329 to D331, and S411 to G413 each bind GTP.

Belongs to the adenylosuccinate synthetase family. As to quaternary structure, homodimer. Mg(2+) is required as a cofactor.

The protein resides in the cytoplasm. It catalyses the reaction IMP + L-aspartate + GTP = N(6)-(1,2-dicarboxyethyl)-AMP + GDP + phosphate + 2 H(+). The protein operates within purine metabolism; AMP biosynthesis via de novo pathway; AMP from IMP: step 1/2. Its function is as follows. Plays an important role in the de novo pathway of purine nucleotide biosynthesis. Catalyzes the first committed step in the biosynthesis of AMP from IMP. This Endomicrobium trichonymphae protein is Adenylosuccinate synthetase.